The sequence spans 93 residues: Antitoxin RelF (93 aa).

This sequence belongs to the phD/YefM antitoxin family. Interacts with toxin RelG, which neutralizes the toxin. Also interacts with toxins RelE and RelK in vitro, in M.smegmatis coexpression with non-cognate toxins increases the toxicity of RelE but not of RelK.

In terms of biological role, antitoxin component of a type II toxin-antitoxin (TA) system. Upon expression in M.smegmatis neutralizes the effect of toxin RelE2. Functionally, induces its own promoter, in combination with RelG represses its own promoter. Has been seen to bind DNA in complex with toxin RelG but not alone. In Mycobacterium tuberculosis (strain ATCC 25618 / H37Rv), this protein is Antitoxin RelF (relF).